A 618-amino-acid chain; its full sequence is Leucine aminopeptidase 2 (618 aa).

Residues 139 to 141 and 271 to 276 each bind a peptide; these read QCQ and PYGGME. His-300 contacts Zn(2+). Glu-301 functions as the Proton acceptor in the catalytic mechanism. Residues His-304 and Glu-323 each contribute to the Zn(2+) site. The Proton donor role is filled by Tyr-389.

This sequence belongs to the peptidase M1 family. The cofactor is Zn(2+).

The protein localises to the cytoplasm. Its subcellular location is the nucleus. It carries out the reaction an epoxide + H2O = an ethanediol. Its function is as follows. Aminopeptidase that preferentially cleaves di- and tripeptides. Also has low epoxide hydrolase activity (in vitro). Can hydrolyze the epoxide leukotriene LTA(4) but it forms preferentially 5,6-dihydroxy-7,9,11,14-eicosatetraenoic acid rather than the cytokine leukotriene B(4) as the product compared to the homologous mammalian enzyme (in vitro). In Aspergillus clavatus (strain ATCC 1007 / CBS 513.65 / DSM 816 / NCTC 3887 / NRRL 1 / QM 1276 / 107), this protein is Leucine aminopeptidase 2.